We begin with the raw amino-acid sequence, 55 residues long: Large ribosomal subunit protein bL33 (55 aa).

The protein belongs to the bacterial ribosomal protein bL33 family.

This is Large ribosomal subunit protein bL33 from Campylobacter fetus subsp. fetus (strain 82-40).